The sequence spans 284 residues: Bifunctional protein FolD (284 aa).

Residues 164–166 (GRG), T189, and I230 each bind NADP(+).

Belongs to the tetrahydrofolate dehydrogenase/cyclohydrolase family. In terms of assembly, homodimer.

The catalysed reaction is (6R)-5,10-methylene-5,6,7,8-tetrahydrofolate + NADP(+) = (6R)-5,10-methenyltetrahydrofolate + NADPH. The enzyme catalyses (6R)-5,10-methenyltetrahydrofolate + H2O = (6R)-10-formyltetrahydrofolate + H(+). It functions in the pathway one-carbon metabolism; tetrahydrofolate interconversion. Catalyzes the oxidation of 5,10-methylenetetrahydrofolate to 5,10-methenyltetrahydrofolate and then the hydrolysis of 5,10-methenyltetrahydrofolate to 10-formyltetrahydrofolate. In Pelotomaculum thermopropionicum (strain DSM 13744 / JCM 10971 / SI), this protein is Bifunctional protein FolD.